The chain runs to 307 residues: Ornithine carbamoyltransferase (307 aa).

Residues 50 to 53 (STRT), Gln-77, Arg-101, and 128 to 131 (HPCQ) each bind carbamoyl phosphate. L-ornithine is bound by residues Asn-160, Asp-224, and 228–229 (SM). Residues 264–265 (CL) and Arg-292 contribute to the carbamoyl phosphate site.

The protein belongs to the aspartate/ornithine carbamoyltransferase superfamily. OTCase family.

It localises to the cytoplasm. The catalysed reaction is carbamoyl phosphate + L-ornithine = L-citrulline + phosphate + H(+). Its pathway is amino-acid biosynthesis; L-arginine biosynthesis; L-arginine from L-ornithine and carbamoyl phosphate: step 1/3. With respect to regulation, inhibited by arginine, norvaline. Its function is as follows. Reversibly catalyzes the transfer of the carbamoyl group from carbamoyl phosphate (CP) to the N(epsilon) atom of ornithine (ORN) to produce L-citrulline, which is a substrate for argininosuccinate synthetase, the enzyme involved in the final step in arginine biosynthesis. This chain is Ornithine carbamoyltransferase, found in Mycolicibacterium smegmatis (strain ATCC 700084 / mc(2)155) (Mycobacterium smegmatis).